The chain runs to 545 residues: Tripartite motif-containing protein 55 (545 aa).

The RING-type zinc-finger motif lies at 26-82; sequence CPICLEMFTKPVVILPCQHNLCRKCASDIFQASNPYLPTRGGTTVASGGRFRCPSCR. The B box-type zinc-finger motif lies at 119-161; it reads LDQPMCEEHEEERINIYCLNCEVPTCSLCKVFGAHKDCQVAPL. Zn(2+) contacts are provided by C124, H127, C147, and H153. Positions 219–258 form a coiled coil; the sequence is YSILEERKTEMTQAITRTQEEKLEHVRTLIRKYSDHLENV. The COS domain maps to 269-327; sequence MDEPEMAVFLQNAKTLLQKITEASKAFQMEKIEQGYEIMNNFTVNLNREEKIIREIDFS. Disordered stretches follow at residues 324 to 378 and 406 to 528; these read IDFS…SELA and LVTQ…GADS. A compositionally biased stretch (acidic residues) spans 328–355; sequence REEEDEDDEGEVDEEGEGEDAVEVEEAE. 2 stretches are compositionally biased toward low complexity: residues 417–426 and 469–493; these read SQQTTQSETS and SAAE…AAVS. Polar residues predominate over residues 495–506; sequence KESSSTAATSQI. Positions 510–520 are enriched in low complexity; it reads ASSPQGQAAAL.

Homooligomer and heterooligomer. Interacts with titin/TTN. Interacts with myosins. Interacts with SQSTM1 and NBR1. Probably interacts with TRIM63 and TRIM54. Post-translationally, targeted for degradation through the proteasomal and lysosomal pathways in the presence of SUMO3.

Its subcellular location is the nucleus. The protein localises to the cytoplasm. It carries out the reaction S-ubiquitinyl-[E2 ubiquitin-conjugating enzyme]-L-cysteine + [acceptor protein]-L-lysine = [E2 ubiquitin-conjugating enzyme]-L-cysteine + N(6)-ubiquitinyl-[acceptor protein]-L-lysine.. Its function is as follows. E3 ubiquitin ligase that plays an important role in regulating cardiac development and contractility, muscle growth, metabolism, and fiber-type differentiation. Acts as a critical factor that regulates cardiomyocyte size during development in concert with TRIM63 by regulating E2F1-mediated gene expression. Plays a role in apoptosis induction in cardiomyocytes by promoting ubiquitination of the DUSP1 phosphatase. Promotes non-canonical NF-kappa-B signaling and B-cell-mediated immune responses by mediating NFKB2 'Lys-48'-linked ubiquitination and processing. In turn, NFKB2 is further processed by valosin-containing protein/VCP, an ATPase that mediates ubiquitin-dependent protein degradation by the proteasome. May play a role in preventing macrophages from producing inflammatory factors and migrating by downregulating the level of nuclear NF-kappa-B subunit RELA. Also modifies PPARG via polyubiquitination and accelerates PPARG proteasomal degradation to inhibit its activity. The polypeptide is Tripartite motif-containing protein 55 (Trim55) (Rattus norvegicus (Rat)).